We begin with the raw amino-acid sequence, 165 residues long: Alanine- and arginine-rich domain-containing protein (165 aa).

A disordered region spans residues 136-165 (QQLKKRQDQERASKPQSPQDEEMNPECGNA).

The chain is Alanine- and arginine-rich domain-containing protein (Aard) from Rattus norvegicus (Rat).